Consider the following 298-residue polypeptide: Serpentine receptor class delta-34 (298 aa).

A run of 6 helical transmembrane segments spans residues 10–30 (SSIM…FTQV), 54–74 (ACFF…FAIP), 99–119 (MILL…VITY), 158–178 (LATN…IVFI), 207–227 (LTIQ…AHLI), and 242–262 (VLYM…IVTI).

Belongs to the nematode receptor-like protein srd family.

The protein resides in the membrane. This chain is Serpentine receptor class delta-34 (srd-34), found in Caenorhabditis elegans.